We begin with the raw amino-acid sequence, 495 residues long: GTPase Der (495 aa).

EngA-type G domains lie at 3-166 (PVIA…MDAE) and 208-381 (IKLA…DCST). GTP-binding positions include 9–16 (GRPNVGKS), 56–60 (DTGGI), 118–121 (NKTD), 214–221 (GRPNVGKS), 261–265 (DTAGV), and 326–329 (NKWD). Residues 382–466 (KRVGTSLLTR…PIRIQFKEGE (85 aa)) enclose the KH-like domain.

This sequence belongs to the TRAFAC class TrmE-Era-EngA-EngB-Septin-like GTPase superfamily. EngA (Der) GTPase family. Associates with the 50S ribosomal subunit.

In terms of biological role, GTPase that plays an essential role in the late steps of ribosome biogenesis. The protein is GTPase Der of Yersinia pseudotuberculosis serotype O:3 (strain YPIII).